Consider the following 512-residue polypeptide: GMP synthase [glutamine-hydrolyzing] (512 aa).

Positions 6–195 (KIIILDFGSQ…VFNICGCQPK (190 aa)) constitute a Glutamine amidotransferase type-1 domain. The active-site Nucleophile is Cys83. Residues His169 and Glu171 contribute to the active site. The GMPS ATP-PPase domain maps to 196 to 387 (WKITEFISAA…LGIDFKFVYK (192 aa)). 223–229 (SGGVDSS) contacts ATP.

In terms of assembly, homodimer.

It catalyses the reaction XMP + L-glutamine + ATP + H2O = GMP + L-glutamate + AMP + diphosphate + 2 H(+). The protein operates within purine metabolism; GMP biosynthesis; GMP from XMP (L-Gln route): step 1/1. Functionally, catalyzes the synthesis of GMP from XMP. In Spiroplasma kunkelii, this protein is GMP synthase [glutamine-hydrolyzing].